The sequence spans 185 residues: Large ribosomal subunit protein uL22 (185 aa).

The tract at residues 160–185 (VSHDDSQKKKVSKKKLARQKEKMMRE) is disordered.

Belongs to the universal ribosomal protein uL22 family.

The sequence is that of Large ribosomal subunit protein uL22 (RpL17) from Maconellicoccus hirsutus (Pink hibiscus mealybug).